Reading from the N-terminus, the 912-residue chain is Brevican core protein (912 aa).

The first 22 residues, 1–22 (MAPLFLPLLATLVLAWIPVALA), serve as a signal peptide directing secretion. The Ig-like V-type domain occupies 36-155 (RVRIAGDAPL…SSDAVEVKVK (120 aa)). Cystine bridges form between C57–C137, C179–C250, C203–C224, C277–C352, and C301–C322. An N-linked (GlcNAc...) asparagine glycan is attached at N130. 2 consecutive Link domains span residues 157–252 (VVFL…YCYA) and 257–354 (GELF…YCFR). Residue N337 is glycosylated (N-linked (GlcNAc...) asparagine). Disordered regions lie at residues 408 to 427 (IPII…PAEA) and 438 to 651 (SIVP…SGDC). Phosphoserine is present on S418. O-linked (Xyl...) (chondroitin sulfate) serine glycosylation is present at S418. A compositionally biased stretch (basic and acidic residues) spans 448–463 (EEGKVLEQEEKYRGEE). The span at 464–478 (EKEEEEEEEEVEDEA) shows a compositional bias: acidic residues. A compositionally biased stretch (pro residues) spans 520 to 537 (VSPPPYDEPEAPRPPRVL). Residues 603-617 (GDTRDLETPSEENSR) are compositionally biased toward basic and acidic residues. Positions 647–683 (SSGDCVPSPCHNGGTCLEEEEGVRCLCLPGYGGDLCD) constitute an EGF-like domain. Intrachain disulfides connect C651/C662, C656/C671, C673/C682, C689/C700, C717/C809, C785/C801, C816/C859, and C845/C872. The 129-residue stretch at 683 to 811 (DVGLHFCSPG…NYHLSYTCKM (129 aa)) folds into the C-type lectin domain. Residues 814–874 (VSCGPPPELP…WGLPQISCVP (61 aa)) enclose the Sushi domain.

It belongs to the aggrecan/versican proteoglycan family. As to quaternary structure, interacts with TNR. O-glycosylated; contains chondroitin sulfate. Brain; expressed in cerebellar astrocytes but not in neurons.

The protein localises to the secreted. It is found in the extracellular space. The protein resides in the extracellular matrix. Its function is as follows. May play a role in the terminally differentiating and the adult nervous system during postnatal development. Could stabilize interactions between hyaluronan (HA) and brain proteoglycans. This chain is Brevican core protein (BCAN), found in Bos taurus (Bovine).